The sequence spans 625 residues: Autophagy-related protein 13b (625 aa).

Composition is skewed to low complexity over residues 322-332 (PSVSCSPSPTR) and 455-477 (PSGV…SSRS). Disordered regions lie at residues 322 to 388 (PSVS…AVPR), 452 to 527 (FRRP…YPKK), and 544 to 564 (PPLR…NNNK). Over residues 498–518 (ITDRNSRPGSFDHRGDIHEPF) the composition is skewed to basic and acidic residues.

The protein belongs to the ATG13 family. Plant subfamily.

Its subcellular location is the cytoplasmic vesicle. The protein resides in the autophagosome. Functionally, involved in autophagy in a nutritional condition dependent manner. The ATG1-ATG13 protein kinase complex regulates downstream events required for autophagosome enclosure and/or vacuolar delivery. Becomes a target of autophagy under nutrient starvation. Connects autophagy to plant nutritional status. This Arabidopsis thaliana (Mouse-ear cress) protein is Autophagy-related protein 13b.